Consider the following 406-residue polypeptide: Arginine biosynthesis bifunctional protein ArgJ (406 aa).

Positions 152, 179, 190, 277, 401, and 406 each coordinate substrate. The Nucleophile role is filled by Thr190.

The protein belongs to the ArgJ family. As to quaternary structure, heterotetramer of two alpha and two beta chains.

The protein localises to the cytoplasm. It carries out the reaction N(2)-acetyl-L-ornithine + L-glutamate = N-acetyl-L-glutamate + L-ornithine. The enzyme catalyses L-glutamate + acetyl-CoA = N-acetyl-L-glutamate + CoA + H(+). The protein operates within amino-acid biosynthesis; L-arginine biosynthesis; L-ornithine and N-acetyl-L-glutamate from L-glutamate and N(2)-acetyl-L-ornithine (cyclic): step 1/1. Its pathway is amino-acid biosynthesis; L-arginine biosynthesis; N(2)-acetyl-L-ornithine from L-glutamate: step 1/4. Its function is as follows. Catalyzes two activities which are involved in the cyclic version of arginine biosynthesis: the synthesis of N-acetylglutamate from glutamate and acetyl-CoA as the acetyl donor, and of ornithine by transacetylation between N(2)-acetylornithine and glutamate. The chain is Arginine biosynthesis bifunctional protein ArgJ from Neisseria gonorrhoeae.